The following is a 486-amino-acid chain: GTPase Obg (486 aa).

The Obg domain maps to 2–159; sequence SRFIDRVVLH…RELVLELKSV (158 aa). In terms of domain architecture, OBG-type G spans 160–340; sequence ADVGLVGFPS…LTFALAKLVA (181 aa). Residues 166–173, 191–195, 212–215, 292–295, and 321–323 contribute to the GTP site; these read GFPSAGKS, FTTLV, DVPG, NKAD, and SAV. Residues Ser173 and Thr193 each contribute to the Mg(2+) site. One can recognise an OCT domain in the interval 358-438; it reads PVISNENSFS…IGNVSFDWEP (81 aa). Residues 462-486 are disordered; it reads RIGATERKHASRIRRGLEGLDPEDQ.

Belongs to the TRAFAC class OBG-HflX-like GTPase superfamily. OBG GTPase family. In terms of assembly, monomer. Mg(2+) serves as cofactor.

The protein resides in the cytoplasm. Its function is as follows. An essential GTPase which binds GTP, GDP and possibly (p)ppGpp with moderate affinity, with high nucleotide exchange rates and a fairly low GTP hydrolysis rate. Plays a role in control of the cell cycle, stress response, ribosome biogenesis and in those bacteria that undergo differentiation, in morphogenesis control. In Rhodococcus jostii (strain RHA1), this protein is GTPase Obg.